A 767-amino-acid chain; its full sequence is Dipeptidyl peptidase 4 (767 aa).

Residues 1–6 lie on the Cytoplasmic side of the membrane; sequence MKTPWK. Residues 7 to 28 traverse the membrane as a helical; Signal-anchor for type II membrane protein segment; sequence VLLGLLGVAALVTIITVPVVLL. Over 29–767 the chain is Extracellular; that stretch reads NKDEAAADSR…HFLQQCFSLR (739 aa). N-linked (GlcNAc...) asparagine glycosylation is found at Asn83, Asn90, Asn148, Asn217, Asn227, and Asn319. Disulfide bonds link Cys326–Cys337, Cys383–Cys395, Cys445–Cys448, and Cys455–Cys473. A glycan (N-linked (GlcNAc...) asparagine) is linked at Asn521. Catalysis depends on Ser631, which acts as the Charge relay system. Cys650 and Cys763 form a disulfide bridge. A glycan (N-linked (GlcNAc...) asparagine) is linked at Asn686. Active-site charge relay system residues include Asp709 and His741.

This sequence belongs to the peptidase S9B family. DPPIV subfamily. As to quaternary structure, monomer. Homodimer. Heterodimer with Seprase (FAP). Requires homodimerization for optimal dipeptidyl peptidase activity and T-cell costimulation. Found in a membrane raft complex, at least composed of BCL10, CARD11, DPP4 and IKBKB. Associates with collagen. Interacts with PTPRC; the interaction is enhanced in an interleukin-12-dependent manner in activated lymphocytes. Interacts (via extracellular domain) with ADA; does not inhibit its dipeptidyl peptidase activity. Interacts with CAV1 (via the N-terminus); the interaction is direct. Interacts (via cytoplasmic tail) with CARD11 (via PDZ domain); its homodimerization is necessary for interaction with CARD11. Interacts with IGF2R; the interaction is direct. Interacts with GPC3. The soluble form (Dipeptidyl peptidase 4 soluble form also named SDPP) derives from the membrane form (Dipeptidyl peptidase 4 membrane form also named MDPP) by proteolytic processing. Post-translationally, N- and O-Glycosylated. In terms of processing, phosphorylated. Mannose 6-phosphate residues in the carbohydrate moiety are necessary for interaction with IGF2R in activated T-cells. Mannose 6-phosphorylation is induced during T-cell activation. In terms of tissue distribution, expressed in bile ducts and other epithelial brush borders (small intestine, kidney, colon, pancreatic duct); acinar structures in salivary glands; endothelial structures and T cell areas in thymus, spleen and lymph node.

It is found in the secreted. Its subcellular location is the cell membrane. It localises to the apical cell membrane. The protein resides in the cell projection. The protein localises to the invadopodium membrane. It is found in the lamellipodium membrane. Its subcellular location is the cell junction. It localises to the membrane raft. It carries out the reaction Release of an N-terminal dipeptide, Xaa-Yaa-|-Zaa-, from a polypeptide, preferentially when Yaa is Pro, provided Zaa is neither Pro nor hydroxyproline.. Its activity is regulated as follows. Inhibited by GPC3 and diprotin A. Functionally, cell surface glycoprotein receptor involved in the costimulatory signal essential for T-cell receptor (TCR)-mediated T-cell activation. Acts as a positive regulator of T-cell coactivation, by binding at least ADA, CAV1, IGF2R, and PTPRC. Its binding to CAV1 and CARD11 induces T-cell proliferation and NF-kappa-B activation in a T-cell receptor/CD3-dependent manner. Its interaction with ADA also regulates lymphocyte-epithelial cell adhesion. In association with FAP is involved in the pericellular proteolysis of the extracellular matrix (ECM), the migration and invasion of endothelial cells into the ECM. May be involved in the promotion of lymphatic endothelial cells adhesion, migration and tube formation. When overexpressed, enhanced cell proliferation, a process inhibited by GPC3. Also acts as a serine exopeptidase with a dipeptidyl peptidase activity that regulates various physiological processes by cleaving peptides in the circulation, including many chemokines, mitogenic growth factors, neuropeptides and peptide hormones. Removes N-terminal dipeptides sequentially from polypeptides having unsubstituted N-termini provided that the penultimate residue is proline. This is Dipeptidyl peptidase 4 (Dpp4) from Rattus norvegicus (Rat).